Consider the following 152-residue polypeptide: UPF0266 membrane protein YobD (152 aa).

3 helical membrane-spanning segments follow: residues 6 to 26, 45 to 65, and 67 to 87; these read LVLI…QFIM, IDSV…VTNH, and ALIT…IFWI.

The protein belongs to the UPF0266 family.

The protein resides in the cell inner membrane. This chain is UPF0266 membrane protein YobD, found in Escherichia coli O127:H6 (strain E2348/69 / EPEC).